The chain runs to 304 residues: Porphobilinogen deaminase (304 aa).

Cys240 is modified (S-(dipyrrolylmethanemethyl)cysteine).

It belongs to the HMBS family. In terms of assembly, monomer. It depends on dipyrromethane as a cofactor.

It catalyses the reaction 4 porphobilinogen + H2O = hydroxymethylbilane + 4 NH4(+). It functions in the pathway porphyrin-containing compound metabolism; protoporphyrin-IX biosynthesis; coproporphyrinogen-III from 5-aminolevulinate: step 2/4. Functionally, tetrapolymerization of the monopyrrole PBG into the hydroxymethylbilane pre-uroporphyrinogen in several discrete steps. This is Porphobilinogen deaminase from Xanthomonas oryzae pv. oryzae (strain KACC10331 / KXO85).